The following is a 386-amino-acid chain: Cytochrome b (386 aa).

Transmembrane regions (helical) follow at residues 39 to 59, 83 to 104, 119 to 139, and 184 to 204; these read FGSLLGLCLVIQLITGIFLAM, FMLKYIHANGASLFFLCVYIHM, WNIGVIIYLVMMLTAFLGYVL, and FFSLHYLFPFLIAGLGVLHIL. Positions 89 and 103 each coordinate heme b. His-188 and His-202 together coordinate heme b. His-207 is a binding site for a ubiquinone. Helical transmembrane passes span 232–252, 294–314, 326–346, and 353–374; these read YKDLFGIMVLSSILVILCYFM, LGGVLAMVFSILVLLLLPFIH, LGKIAFWFLVADFILLTWLGA, and YIMIGQFASLFYFCYFLVLVPL.

The protein belongs to the cytochrome b family. The main subunits of complex b-c1 are: cytochrome b, cytochrome c1 and the Rieske protein. The cofactor is heme b.

The protein localises to the mitochondrion inner membrane. In terms of biological role, component of the ubiquinol-cytochrome c reductase complex (complex III or cytochrome b-c1 complex) that is part of the mitochondrial respiratory chain. The b-c1 complex mediates electron transfer from ubiquinol to cytochrome c. Contributes to the generation of a proton gradient across the mitochondrial membrane that is then used for ATP synthesis. This Sarcophyton glaucum (Toadstool umbrella leather coral) protein is Cytochrome b (MT-CYB).